The chain runs to 396 residues: Actin-related protein 6 (396 aa).

The residue at position 2 (Thr2) is an N-acetylthreonine. At Lys260 the chain carries N6-acetyllysine.

It belongs to the actin family. ARP6 subfamily. Component of the chromatin-remodeling SRCAP complex composed of at least SRCAP, DMAP1, RUVBL1, RUVBL2, ACTL6A, YEATS4, ACTR6 and ZNHIT1. Interacts with CBX1, CBX3 and CBX5.

It is found in the cytoplasm. Its subcellular location is the cytoskeleton. The protein resides in the nucleus. It localises to the nucleolus. Required for formation and/or maintenance of proper nucleolar structure and function. Plays a dual role in the regulation of ribosomal DNA (rDNA) transcription. In the presence of high glucose, maintains active rDNA transcription through H2A.Z deposition and under glucose starvation, is required for the repression of rDNA transcription, and this function may be independent of H2A.Z. The protein is Actin-related protein 6 (ACTR6) of Homo sapiens (Human).